A 238-amino-acid polypeptide reads, in one-letter code: Large ribosomal subunit protein uL2 (238 aa).

Over residues 1–11 (MGKRLISQNRG) the composition is skewed to polar residues. Disordered stretches follow at residues 1–22 (MGKRLISQNRGRGTPTYRAPSH) and 202–223 (FGGGAWKHPGKPTTVSRNAPPG).

This sequence belongs to the universal ribosomal protein uL2 family. In terms of assembly, part of the 50S ribosomal subunit. Forms a bridge to the 30S subunit in the 70S ribosome.

One of the primary rRNA binding proteins. Required for association of the 30S and 50S subunits to form the 70S ribosome, for tRNA binding and peptide bond formation. It has been suggested to have peptidyltransferase activity; this is somewhat controversial. Makes several contacts with the 16S rRNA in the 70S ribosome. This chain is Large ribosomal subunit protein uL2, found in Methanosarcina acetivorans (strain ATCC 35395 / DSM 2834 / JCM 12185 / C2A).